Reading from the N-terminus, the 429-residue chain is Phenylalanine--tRNA ligase, chloroplastic/mitochondrial (429 aa).

A chloroplast and mitochondrion-targeting transit peptide spans 1–53 (MTVFSVQSTIFSRASVALLSSNGFKRFSFVSSFSSSAAYSPPKMRKRRYPIVS). A54 is modified (N-acetylalanine). Substrate is bound by residues 163 to 166 (SAHQ), R185, 192 to 194 (THY), 199 to 201 (QME), E269, and F294. One can recognise an FDX-ACB domain in the interval 338 to 429 (SKYPPCYKDI…VQKKLNVELR (92 aa)).

The protein belongs to the class-II aminoacyl-tRNA synthetase family. In terms of assembly, monomer.

It localises to the plastid. It is found in the chloroplast stroma. Its subcellular location is the mitochondrion matrix. It catalyses the reaction tRNA(Phe) + L-phenylalanine + ATP = L-phenylalanyl-tRNA(Phe) + AMP + diphosphate + H(+). Is responsible for the charging of tRNA(Phe) with phenylalanine in mitochondrial translation. The polypeptide is Phenylalanine--tRNA ligase, chloroplastic/mitochondrial (Arabidopsis thaliana (Mouse-ear cress)).